The chain runs to 295 residues: Histamine N-methyltransferase (295 aa).

At Ala-2 the chain carries Blocked amino end (Ala). Glu-28 lines the substrate pocket. S-adenosyl-L-methionine contacts are provided by Gly-60, Glu-89, Gln-94, Ser-120, and Ile-143. Asn-284 lines the substrate pocket.

It belongs to the class I-like SAM-binding methyltransferase superfamily. HNMT family. As to quaternary structure, monomer.

Its subcellular location is the cytoplasm. It carries out the reaction histamine + S-adenosyl-L-methionine = N(tau)-methylhistamine + S-adenosyl-L-homocysteine + H(+). Its function is as follows. Inactivates histamine by N-methylation. Plays an important role in degrading histamine and in regulating the airway response to histamine. In Rattus norvegicus (Rat), this protein is Histamine N-methyltransferase (Hnmt).